The primary structure comprises 119 residues: Fluoride-specific ion channel FluC (119 aa).

The next 4 membrane-spanning stretches (helical) occupy residues 5–25 (IIPLSIGAALGATARWLLNLA), 34–54 (TGNLFANWTGALLIGIFAETI), 59–79 (WKLLLITGFLGSLTTLSGFSL), and 97–117 (IFLHTAGSLLLTWLGLKIGAA). Positions 69 and 72 each coordinate Na(+).

It belongs to the fluoride channel Fluc/FEX (TC 1.A.43) family.

The protein localises to the cell inner membrane. It catalyses the reaction fluoride(in) = fluoride(out). With respect to regulation, na(+) is not transported, but it plays an essential structural role and its presence is essential for fluoride channel function. Its function is as follows. Fluoride-specific ion channel. Important for reducing fluoride concentration in the cell, thus reducing its toxicity. The polypeptide is Fluoride-specific ion channel FluC (Neisseria meningitidis serogroup C / serotype 2a (strain ATCC 700532 / DSM 15464 / FAM18)).